Here is a 416-residue protein sequence, read N- to C-terminus: CinA-like protein (416 aa).

This sequence belongs to the CinA family.

This Thermosynechococcus vestitus (strain NIES-2133 / IAM M-273 / BP-1) protein is CinA-like protein.